A 393-amino-acid polypeptide reads, in one-letter code: Putative odorant receptor 69a, isoform A (393 aa).

Residues 1 to 39 (MQLHDHMKYIDLGCKMACIPRYQWKGRPTERQFYASEQR) are Cytoplasmic-facing. The chain crosses the membrane as a helical span at residues 40-60 (IVFLLGTICQIFQITGVLIYW). Residues 61 to 76 (YCNGRLATETGTFVAQ) are Extracellular-facing. A helical membrane pass occupies residues 77–97 (LSEMCSSFCLTFVGFCNVYAI). The Cytoplasmic portion of the chain corresponds to 98–139 (STNRNQIETLLEELHQIYPRYRKNHYRCQHYFDMAMTIMRIE). The helical transmembrane segment at 140–160 (FLFYMILYVYYNSAPLWVLLW) threads the bilayer. Residues 161–189 (EHLHEEYDLSFKTQTNTWFPWKVHGSALG) are Extracellular-facing. The helical transmembrane segment at 190-210 (FGMAVLSITVGSFVGVGFSIV) threads the bilayer. Residues 211–269 (TQNLICLLTFQLKLHYDGISSQLVSLDCRRPGAHKELSILIAHHSRILQLGDQVNDIMN) are Cytoplasmic-facing. A helical membrane pass occupies residues 270–290 (FVFGSSLVGATIAICMSSVSI). The Extracellular segment spans residues 291–304 (MLLDLASAFKYASG). A helical transmembrane segment spans residues 305–325 (LVAFVLYNFVICYMGTEVTLA). Topologically, residues 326–365 (SGKVLPAAFYNNWYEGDLVYRRMLLILMMRATKPYMWKTY) are cytoplasmic. A helical membrane pass occupies residues 366–386 (KLAPVSITTYMATLKFSYQMF). Over 387–393 (TCVRSLK) the chain is Extracellular.

This sequence belongs to the insect chemoreceptor superfamily. Heteromeric odorant receptor channel (TC 1.A.69) family. Or49a subfamily. In terms of assembly, interacts with Orco. Complexes exist early in the endomembrane system in olfactory sensory neurons (OSNs), coupling these complexes to the conserved ciliary trafficking pathway. As to expression, expressed in olfactory sensory neurons in the antenna.

It is found in the cell membrane. Odorant receptor which mediates acceptance or avoidance behavior, depending on its substrates. The odorant receptor repertoire encodes a large collection of odor stimuli that vary widely in identity, intensity, and duration. May form a complex with Orco to form odorant-sensing units, providing sensitive and prolonged odorant signaling and calcium permeability. The polypeptide is Putative odorant receptor 69a, isoform A (Or69a) (Drosophila melanogaster (Fruit fly)).